Consider the following 178-residue polypeptide: Large ribosomal subunit protein uL6 (178 aa).

The protein belongs to the universal ribosomal protein uL6 family. As to quaternary structure, part of the 50S ribosomal subunit.

In terms of biological role, this protein binds to the 23S rRNA, and is important in its secondary structure. It is located near the subunit interface in the base of the L7/L12 stalk, and near the tRNA binding site of the peptidyltransferase center. The chain is Large ribosomal subunit protein uL6 from Nitratiruptor sp. (strain SB155-2).